The primary structure comprises 200 residues: Interferon lambda-1 (200 aa).

Residues 1 to 19 (MAAAWTVVLVTLVLGLAVA) form the signal peptide. N65 carries N-linked (GlcNAc...) asparagine glycosylation. Residues C68 and C164 are joined by a disulfide bond.

The protein belongs to the lambda interferon family.

The protein localises to the secreted. Functionally, cytokine with antiviral, antitumour and immunomodulatory activities. Plays a critical role in the antiviral host defense, predominantly in the epithelial tissues. Acts as a ligand for the heterodimeric class II cytokine receptor composed of IL10RB and IFNLR1, and receptor engagement leads to the activation of the JAK/STAT signaling pathway resulting in the expression of IFN-stimulated genes (ISG), which mediate the antiviral state. Has a restricted receptor distribution and therefore restricted targets: is primarily active in epithelial cells and this cell type-selective action is because of the epithelial cell-specific expression of its receptor IFNLR1. Exerts an immunomodulatory effect by up-regulating MHC class I antigen expression. The protein is Interferon lambda-1 (IFNL1) of Homo sapiens (Human).